The sequence spans 142 residues: Nucleoside diphosphate kinase (142 aa).

ATP contacts are provided by K11, F59, R87, T93, R104, and N114. H117 acts as the Pros-phosphohistidine intermediate in catalysis.

It belongs to the NDK family. Homotetramer. It depends on Mg(2+) as a cofactor.

It is found in the cytoplasm. The enzyme catalyses a 2'-deoxyribonucleoside 5'-diphosphate + ATP = a 2'-deoxyribonucleoside 5'-triphosphate + ADP. It carries out the reaction a ribonucleoside 5'-diphosphate + ATP = a ribonucleoside 5'-triphosphate + ADP. Its function is as follows. Major role in the synthesis of nucleoside triphosphates other than ATP. The ATP gamma phosphate is transferred to the NDP beta phosphate via a ping-pong mechanism, using a phosphorylated active-site intermediate. The sequence is that of Nucleoside diphosphate kinase from Salinibacter ruber (strain DSM 13855 / M31).